A 279-amino-acid polypeptide reads, in one-letter code: Urease accessory protein UreD (279 aa).

The protein belongs to the UreD family. In terms of assembly, ureD, UreF and UreG form a complex that acts as a GTP-hydrolysis-dependent molecular chaperone, activating the urease apoprotein by helping to assemble the nickel containing metallocenter of UreC. The UreE protein probably delivers the nickel.

It is found in the cytoplasm. Required for maturation of urease via the functional incorporation of the urease nickel metallocenter. The chain is Urease accessory protein UreD from Streptococcus thermophilus (strain CNRZ 1066).